A 779-amino-acid polypeptide reads, in one-letter code: Glutathione biosynthesis bifunctional protein GshAB (779 aa).

Positions 1-346 are glutamate--cysteine ligase; sequence MAFSKNILDS…ETANRNQEQA (346 aa). The ATP-grasp domain maps to 512–768; it reads KKILDQAGIN…LDDKILDALG (257 aa). 539–597 provides a ligand contact to ATP; the sequence is PYYRGRAIVIKPKSTNFGIGITIIKENNRHDFFAQGIAQAFKHEATVLIENFSSGKEYR. Residues Asp719, Glu738, and Asn740 each coordinate Mg(2+). Mn(2+) contacts are provided by Asp719, Glu738, and Asn740.

In the N-terminal section; belongs to the glutamate--cysteine ligase type 1 family. Type 2 subfamily. As to quaternary structure, monomer. Mg(2+) serves as cofactor. Mn(2+) is required as a cofactor.

It carries out the reaction L-cysteine + L-glutamate + ATP = gamma-L-glutamyl-L-cysteine + ADP + phosphate + H(+). The catalysed reaction is gamma-L-glutamyl-L-cysteine + glycine + ATP = glutathione + ADP + phosphate + H(+). It functions in the pathway sulfur metabolism; glutathione biosynthesis; glutathione from L-cysteine and L-glutamate: step 1/2. Its pathway is sulfur metabolism; glutathione biosynthesis; glutathione from L-cysteine and L-glutamate: step 2/2. In terms of biological role, synthesizes glutathione from L-glutamate and L-cysteine via gamma-L-glutamyl-L-cysteine. In Desulfotalea psychrophila (strain LSv54 / DSM 12343), this protein is Glutathione biosynthesis bifunctional protein GshAB.